The sequence spans 328 residues: MTKRIAITAGEPASIGPDLVITLAQQAWPAELVVCANPELLLARAAKLGLPLRLIPYHSENKPQPQAAGTLTIAPFELAAEVECGVLNELNSAYVVDTLRFAGEKNMSREFDAVVTGPVHKGIINQAGIAFSGHTEYFAVQANCQDVVMMLAAPGLQVALMTTHIPLAYVAKAITRERLHHIIHILHKELKSKFGLGSPKIYVCGLNPHAGEDGHIGREELDVMIPALNELRAQGIQLVGPLPADTLFQPKYLQDADVILAMYHDQGLPVLKSLGFGKSVNITLGLPYIRTSVDHGTALELAGTGLADSGSFTCALNKAIELASKVSN.

Substrate is bound by residues His134 and Thr135. A divalent metal cation contacts are provided by His164, His209, and His264. Substrate-binding residues include Lys272, Asn281, and Arg290.

This sequence belongs to the PdxA family. As to quaternary structure, homodimer. The cofactor is Zn(2+). It depends on Mg(2+) as a cofactor. Co(2+) is required as a cofactor.

It localises to the cytoplasm. The catalysed reaction is 4-(phosphooxy)-L-threonine + NAD(+) = 3-amino-2-oxopropyl phosphate + CO2 + NADH. It functions in the pathway cofactor biosynthesis; pyridoxine 5'-phosphate biosynthesis; pyridoxine 5'-phosphate from D-erythrose 4-phosphate: step 4/5. Its function is as follows. Catalyzes the NAD(P)-dependent oxidation of 4-(phosphooxy)-L-threonine (HTP) into 2-amino-3-oxo-4-(phosphooxy)butyric acid which spontaneously decarboxylates to form 3-amino-2-oxopropyl phosphate (AHAP). The chain is 4-hydroxythreonine-4-phosphate dehydrogenase from Shewanella denitrificans (strain OS217 / ATCC BAA-1090 / DSM 15013).